Reading from the N-terminus, the 119-residue chain is Ribonuclease P protein component (119 aa).

The protein belongs to the RnpA family. In terms of assembly, consists of a catalytic RNA component (M1 or rnpB) and a protein subunit.

The catalysed reaction is Endonucleolytic cleavage of RNA, removing 5'-extranucleotides from tRNA precursor.. Functionally, RNaseP catalyzes the removal of the 5'-leader sequence from pre-tRNA to produce the mature 5'-terminus. It can also cleave other RNA substrates such as 4.5S RNA. The protein component plays an auxiliary but essential role in vivo by binding to the 5'-leader sequence and broadening the substrate specificity of the ribozyme. The polypeptide is Ribonuclease P protein component (Syntrophomonas wolfei subsp. wolfei (strain DSM 2245B / Goettingen)).